Here is a 193-residue protein sequence, read N- to C-terminus: dTTP/UTP pyrophosphatase (193 aa).

Asp-71 acts as the Proton acceptor in catalysis.

Belongs to the Maf family. YhdE subfamily. Requires a divalent metal cation as cofactor.

It is found in the cytoplasm. The enzyme catalyses dTTP + H2O = dTMP + diphosphate + H(+). The catalysed reaction is UTP + H2O = UMP + diphosphate + H(+). Nucleoside triphosphate pyrophosphatase that hydrolyzes dTTP and UTP. May have a dual role in cell division arrest and in preventing the incorporation of modified nucleotides into cellular nucleic acids. In Geobacter sp. (strain M21), this protein is dTTP/UTP pyrophosphatase.